The primary structure comprises 332 residues: L-lactate dehydrogenase A chain (332 aa).

Ala-2 bears the N-acetylalanine mark. N6-acetyllysine; alternate is present on Lys-5. Lys-5 bears the N6-succinyllysine; alternate mark. Lys-14 carries the N6-acetyllysine modification. Thr-18 is modified (phosphothreonine). Residue 29 to 57 coordinates NAD(+); the sequence is GAVGMACAISILMKDLADELALVDVIEDK. Residue Lys-57 is modified to N6-acetyllysine; alternate. A Glycyl lysine isopeptide (Lys-Gly) (interchain with G-Cter in SUMO2); alternate cross-link involves residue Lys-57. Residue Lys-81 is modified to N6-acetyllysine. Arg-99 contributes to the NAD(+) binding site. Substrate is bound at residue Arg-106. Lys-118 carries the N6-acetyllysine; alternate modification. The residue at position 118 (Lys-118) is an N6-succinyllysine; alternate. N6-acetyllysine is present on Lys-126. The substrate site is built by Asn-138 and Arg-169. His-193 serves as the catalytic Proton acceptor. N6-acetyllysine is present on residues Lys-224 and Lys-232. Residue Tyr-239 is modified to Phosphotyrosine. N6-acetyllysine is present on Lys-243. A substrate-binding site is contributed by Thr-248. Thr-309 bears the Phosphothreonine mark. Ser-310 carries the post-translational modification Phosphoserine. Lys-318 is subject to N6-acetyllysine; alternate. N6-succinyllysine; alternate is present on Lys-318. Thr-322 carries the phosphothreonine modification.

It belongs to the LDH/MDH superfamily. LDH family. Homotetramer. Interacts with PTEN upstream reading frame protein MP31. ISGylated.

The protein resides in the cytoplasm. It catalyses the reaction (S)-lactate + NAD(+) = pyruvate + NADH + H(+). Its pathway is fermentation; pyruvate fermentation to lactate; (S)-lactate from pyruvate: step 1/1. Interconverts simultaneously and stereospecifically pyruvate and lactate with concomitant interconversion of NADH and NAD(+). The protein is L-lactate dehydrogenase A chain (LDHA) of Pongo abelii (Sumatran orangutan).